Reading from the N-terminus, the 271-residue chain is 2-dehydro-3-deoxyphosphooctonate aldolase (271 aa).

It belongs to the KdsA family.

Its subcellular location is the cytoplasm. It carries out the reaction D-arabinose 5-phosphate + phosphoenolpyruvate + H2O = 3-deoxy-alpha-D-manno-2-octulosonate-8-phosphate + phosphate. It functions in the pathway carbohydrate biosynthesis; 3-deoxy-D-manno-octulosonate biosynthesis; 3-deoxy-D-manno-octulosonate from D-ribulose 5-phosphate: step 2/3. It participates in bacterial outer membrane biogenesis; lipopolysaccharide biosynthesis. This chain is 2-dehydro-3-deoxyphosphooctonate aldolase, found in Campylobacter jejuni subsp. jejuni serotype O:23/36 (strain 81-176).